A 709-amino-acid polypeptide reads, in one-letter code: Pentatricopeptide repeat-containing protein At5g42310, chloroplastic (709 aa).

Residues 1–54 (MLLLQQPPLVSTRFHSLYFLTHHHHHHHRFFQPPISAFSATTSASLPSPSPSSS) constitute a chloroplast transit peptide. 14 PPR repeats span residues 196–230 (TPLT…GYQS), 231–267 (DFVN…KLEL), 268–302 (DVQL…GLSA), 303–337 (KTAT…GIKP), 338–372 (RTRA…GVSP), 373–407 (DEHT…DVQP), 408–442 (NSFV…GVKP), 443–477 (DRQF…GIEP), 478–512 (DRVT…GCLP), 513–547 (CATT…GILP), 548–582 (NVVT…GLKP), 583–617 (SSTM…GLKP), 618–652 (SLLA…GVKP), and 653–687 (DVVT…GCKP).

Belongs to the PPR family. P subfamily. Interacts with PDE338.

The protein localises to the plastid. It localises to the chloroplast stroma. Its subcellular location is the chloroplast thylakoid. The protein resides in the chloroplast. Functionally, required for chloroplast protein synthesis and accumulation of subunits of the thylakoid protein complexes. Activates psaC and petA translation by binding their 5'-UTRs. Required for the correct processing of petB and petD mRNAs. Interacts with the petB and petD intergenic region and is required for the generation of petB and petD monocistronic RNAs. This Arabidopsis thaliana (Mouse-ear cress) protein is Pentatricopeptide repeat-containing protein At5g42310, chloroplastic.